Consider the following 907-residue polypeptide: Isoleucine--tRNA ligase (907 aa).

The 'HIGH' region signature appears at 57-67 (PFANGKAHMGS). Glu549 serves as a coordination point for L-isoleucyl-5'-AMP. The short motif at 590-594 (KLSKS) is the 'KMSKS' region element. Lys593 is an ATP binding site. Residues Cys867, Cys870, Cys889, and Cys892 each coordinate Zn(2+).

Belongs to the class-I aminoacyl-tRNA synthetase family. IleS type 1 subfamily. In terms of assembly, monomer. Zn(2+) serves as cofactor.

It localises to the cytoplasm. The enzyme catalyses tRNA(Ile) + L-isoleucine + ATP = L-isoleucyl-tRNA(Ile) + AMP + diphosphate. Catalyzes the attachment of isoleucine to tRNA(Ile). As IleRS can inadvertently accommodate and process structurally similar amino acids such as valine, to avoid such errors it has two additional distinct tRNA(Ile)-dependent editing activities. One activity is designated as 'pretransfer' editing and involves the hydrolysis of activated Val-AMP. The other activity is designated 'posttransfer' editing and involves deacylation of mischarged Val-tRNA(Ile). This is Isoleucine--tRNA ligase from Methylacidiphilum infernorum (isolate V4) (Methylokorus infernorum (strain V4)).